A 481-amino-acid chain; its full sequence is Arginine biosynthesis bifunctional protein ArgJ, chloroplastic (481 aa).

Residues Thr225, Lys251, Thr262, Glu349, Asn476, and Thr481 each contribute to the substrate site. Thr262 functions as the Nucleophile in the catalytic mechanism.

Belongs to the ArgJ family. In terms of assembly, heterodimer of an alpha and a beta chain.

The protein resides in the plastid. Its subcellular location is the chloroplast. It carries out the reaction N(2)-acetyl-L-ornithine + L-glutamate = N-acetyl-L-glutamate + L-ornithine. The enzyme catalyses L-glutamate + acetyl-CoA = N-acetyl-L-glutamate + CoA + H(+). Its pathway is amino-acid biosynthesis; L-arginine biosynthesis; L-ornithine and N-acetyl-L-glutamate from L-glutamate and N(2)-acetyl-L-ornithine (cyclic): step 1/1. The protein operates within amino-acid biosynthesis; L-arginine biosynthesis; N(2)-acetyl-L-ornithine from L-glutamate: step 1/4. In terms of biological role, catalyzes two activities which are involved in the cyclic version of arginine biosynthesis: the synthesis of acetylglutamate from glutamate and acetyl-CoA, and of ornithine by transacetylation between acetylornithine and glutamate. In Populus trichocarpa (Western balsam poplar), this protein is Arginine biosynthesis bifunctional protein ArgJ, chloroplastic.